The sequence spans 239 residues: Protein G1-like8 (239 aa).

2 disordered regions span residues 1–35 (MEGG…RYES) and 149–239 (KARG…ATRV). A compositionally biased stretch (low complexity) spans 9–29 (DAQAQAQPVAQAPPAMQPMQQ). In terms of domain architecture, ALOG spans 32–159 (RYESQKRRDW…ARGIPYEKKK (128 aa)). The short motif at 157-161 (KKKRK) is the Nuclear localization signal element. The span at 167–178 (QPPPQPPLPPQH) shows a compositional bias: pro residues. Composition is skewed to low complexity over residues 179–215 (QPGA…ATSQ) and 223–239 (TTTT…ATRV).

This sequence belongs to the plant homeotic and developmental regulators ALOG protein family.

It localises to the nucleus. Its function is as follows. Probable transcription regulator that acts as a developmental regulator by promoting cell growth in response to light. The polypeptide is Protein G1-like8 (Oryza sativa subsp. indica (Rice)).